An 89-amino-acid polypeptide reads, in one-letter code: Small ribosomal subunit protein uS15 (89 aa).

This sequence belongs to the universal ribosomal protein uS15 family. In terms of assembly, part of the 30S ribosomal subunit. Forms a bridge to the 50S subunit in the 70S ribosome, contacting the 23S rRNA.

One of the primary rRNA binding proteins, it binds directly to 16S rRNA where it helps nucleate assembly of the platform of the 30S subunit by binding and bridging several RNA helices of the 16S rRNA. In terms of biological role, forms an intersubunit bridge (bridge B4) with the 23S rRNA of the 50S subunit in the ribosome. The protein is Small ribosomal subunit protein uS15 of Prochlorococcus marinus subsp. pastoris (strain CCMP1986 / NIES-2087 / MED4).